The sequence spans 335 residues: Ketol-acid reductoisomerase (NADP(+)) (335 aa).

In terms of domain architecture, KARI N-terminal Rossmann spans 5 to 185 (SKIYTDKDSN…GATRAGVIPT (181 aa)). NADP(+) is bound by residues 28–31 (YGSQ), Ser-56, and 86–89 (DMVQ). Residue His-111 is part of the active site. Gly-137 provides a ligand contact to NADP(+). The region spanning 186–331 (TFKEETETDL…NQLKDLIQKG (146 aa)) is the KARI C-terminal knotted domain. The Mg(2+) site is built by Asp-194, Glu-198, Glu-230, and Glu-234. Ser-255 serves as a coordination point for substrate.

Belongs to the ketol-acid reductoisomerase family. It depends on Mg(2+) as a cofactor.

It carries out the reaction (2R)-2,3-dihydroxy-3-methylbutanoate + NADP(+) = (2S)-2-acetolactate + NADPH + H(+). The catalysed reaction is (2R,3R)-2,3-dihydroxy-3-methylpentanoate + NADP(+) = (S)-2-ethyl-2-hydroxy-3-oxobutanoate + NADPH + H(+). It functions in the pathway amino-acid biosynthesis; L-isoleucine biosynthesis; L-isoleucine from 2-oxobutanoate: step 2/4. The protein operates within amino-acid biosynthesis; L-valine biosynthesis; L-valine from pyruvate: step 2/4. Functionally, involved in the biosynthesis of branched-chain amino acids (BCAA). Catalyzes an alkyl-migration followed by a ketol-acid reduction of (S)-2-acetolactate (S2AL) to yield (R)-2,3-dihydroxy-isovalerate. In the isomerase reaction, S2AL is rearranged via a Mg-dependent methyl migration to produce 3-hydroxy-3-methyl-2-ketobutyrate (HMKB). In the reductase reaction, this 2-ketoacid undergoes a metal-dependent reduction by NADPH to yield (R)-2,3-dihydroxy-isovalerate. In Saccharolobus islandicus (strain M.16.27) (Sulfolobus islandicus), this protein is Ketol-acid reductoisomerase (NADP(+)).